A 407-amino-acid polypeptide reads, in one-letter code: Transcriptional regulator alnR (407 aa).

The segment at residues serine 23 to tyrosine 53 is a DNA-binding region (zn(2)-C6 fungal-type). The tract at residues tyrosine 53–asparagine 85 is disordered. Polar residues predominate over residues glutamate 75–asparagine 85.

The protein localises to the nucleus. Its function is as follows. Transcriptional regulator involved in the positive regulation of the expression of the gene cluster that mediates the biosynthesis of asperlin, a polyketide showing anti-inflammatory, antitumor and antibiotic activities. The sequence is that of Transcriptional regulator alnR from Emericella nidulans (strain FGSC A4 / ATCC 38163 / CBS 112.46 / NRRL 194 / M139) (Aspergillus nidulans).